The following is a 1075-amino-acid chain: Protein EXPORTIN 1A (1075 aa).

Positions 37-103 (ADQILRDLQA…KNYISEVIVQ (67 aa)) constitute an Importin N-terminal domain. HEAT repeat units lie at residues 91–130 (DGMK…QIVK), 135–171 (AKWT…EVFD), 232–267 (IFES…LNFG), 336–373 (SLLL…ELFD), 388–425 (MGLQ…LMIN), 474–513 (DTEK…SMAE), 563–600 (KFLK…KCKR), 612–649 (PFVS…AESD), 682–719 (LKDQ…IFLD), 756–793 (RETL…DYAR), 798–835 (ARES…CTLE), and 894–934 (ETGL…VLTD).

This sequence belongs to the exportin family. As to quaternary structure, interacts with RAN1. As to expression, expressed ubiquitously, with higher levels in stems, inflorescences and roots. Present in mature pollen grains, unpollinated pistils, and 2-week-old seedlings.

The protein localises to the nucleus. It is found in the nuclear pore complex. It localises to the nucleus membrane. In terms of biological role, receptor for the leucine-rich nuclear export signal (NES). Binds cooperatively to the NES on its target protein and to the small GTPase Ran in its active GTP-bound form. Required for the maternal-to-embryonic transition and during gametophyte development. Involved in heat-induced oxidative stress basal resistance. The chain is Protein EXPORTIN 1A from Arabidopsis thaliana (Mouse-ear cress).